A 409-amino-acid polypeptide reads, in one-letter code: MPRNIVVESVKLQPVEEQSVELVERKGLGHPDTIADAAAEISSQYLSRYYIEKYGTILHHNLDKVLVVGGQAAPRFGGGEVLQPIYIIVSGRATTEVRLPDGKTERIPIGTIILRAVKEWIREKFRFLDPESHIIVDYKVGQGSADLVGIYELGKDSVPLANDTSVGVGFAPFSTLEQLVLETERLLNSKEFKEKNPEVGEDIKVMGLRRGRKIELTIAAAIISSLVQDLDHYLSVKEAIKEAVLDLASRIAPDYDVEVYVNTADKPDKGIVYITVTGTSAEHGDDGMTGRGNRSYGLITPLRPMSLEAAAGKNPVSHVGKIYNVMALNIARRIYDNVSGIREVYVKLLSQIGRPINDPLIANIKVVSEKPGEPLPSNALREIEAIVEEELDKYQELTKLFVEGKITIF.

Residue 141 to 146 (GQGSAD) participates in ATP binding.

This sequence belongs to the AdoMet synthase 2 family. It depends on Mg(2+) as a cofactor.

The catalysed reaction is L-methionine + ATP + H2O = S-adenosyl-L-methionine + phosphate + diphosphate. Its pathway is amino-acid biosynthesis; S-adenosyl-L-methionine biosynthesis; S-adenosyl-L-methionine from L-methionine: step 1/1. In terms of biological role, catalyzes the formation of S-adenosylmethionine from methionine and ATP. In Hyperthermus butylicus (strain DSM 5456 / JCM 9403 / PLM1-5), this protein is S-adenosylmethionine synthase.